The sequence spans 312 residues: MTFDENISRILVTDKEYDMPFSKGLLARSLSAAGMKPSESYTLAREIERDLTEQNVLKISKDELRRRVYYTLINRDYEGIGEKYLLWRRVLKKHSIIILVGGSSGVGTSTIAFELASRLGIPSVIGTDSIREVMRRSISKDLVPMLYESSYTAWTALRRSQWEEQDTKGMHLLGFERHVEPVLLGIESIIDRSLTEGTSVIIEGTHIVPGLMGEKYQSMPNVIFLNLTLSSEEIHKKRFTARAKVSDRPLERYLENFEIIKEINQYIVEKSKENNVPVIENVSISETVQKCLEIVTERFSNLTDEPIDSDFY.

An ATP-cone domain is found at 8 to 95; that stretch reads SRILVTDKEY…LWRRVLKKHS (88 aa).

The protein belongs to the 2-phosphoglycerate kinase family. A divalent metal cation is required as a cofactor.

It catalyses the reaction (2R)-2-phosphoglycerate + ATP = (2R)-2,3-bisphosphoglycerate + ADP + H(+). Its pathway is thermoadapter biosynthesis; cyclic 2,3-diphosphoglycerate biosynthesis; cyclic 2,3-diphosphoglycerate from 2-phospho-D-glycerate: step 1/2. Catalyzes the phosphorylation of 2-phosphoglycerate to 2,3-diphosphoglycerate. Involved in the biosynthesis of cyclic 2,3-bisphosphoglycerate, a thermoprotectant. In Methanococcus maripaludis (strain C7 / ATCC BAA-1331), this protein is 2-phosphoglycerate kinase.